The following is a 1286-amino-acid chain: ABC transporter B family member 4 (1286 aa).

Residues 1–39 (MASESGLNGDPNILEEVSETKRDKEEEEEVKKTEKKDEE) form a disordered region. Basic and acidic residues predominate over residues 18–39 (SETKRDKEEEEEVKKTEKKDEE). A helical transmembrane segment spans residues 60 to 80 (FLLMILGTLGSIGNGLGFPLM). One can recognise an ABC transmembrane type-1 1 domain in the interval 63–349 (MILGTLGSIG…TSPCLSAFAA (287 aa)). Residues N94 and N97 are each glycosylated (N-linked (GlcNAc...) asparagine). The next 5 membrane-spanning stretches (helical) occupy residues 109–129 (FVWL…GWMI), 186–206 (IQLL…GWLL), 208–228 (LVML…AIVI), 288–308 (GLGL…AVWY), and 317–337 (GYTG…SMSL). In terms of domain architecture, ABC transporter 1 spans 384-620 (IELKDVYFTY…PEGAYSQLIR (237 aa)). Residue 419-426 (GQSGSGKS) participates in ATP binding. 2 N-linked (GlcNAc...) asparagine glycosylation sites follow: N500 and N571. The segment covering 625–636 (KKSDENAAEEQK) has biased composition (basic and acidic residues). Residues 625-669 (KKSDENAAEEQKMSSIESFKQSSLRKSSLGRSLSKGGSSRGNSSR) form a disordered region. The span at 646–669 (SSLRKSSLGRSLSKGGSSRGNSSR) shows a compositional bias: low complexity. Residue N666 is glycosylated (N-linked (GlcNAc...) asparagine). S671 bears the Phosphoserine mark. Residues 720 to 1007 (LILGSISAAA…SSSLSPDSSK (288 aa)) form the ABC transmembrane type-1 2 domain. 2 consecutive transmembrane segments (helical) span residues 721 to 741 (ILGS…GILI) and 764 to 784 (IIFM…TFFF). 2 N-linked (GlcNAc...) asparagine glycosylation sites follow: N816 and N846. The next 4 membrane-spanning stretches (helical) occupy residues 850-870 (ILAG…VVLA), 871-891 (MLPL…GFSA), 942-962 (GIVS…SYAA), and 976-996 (TTFD…MAIS). An ABC transporter 2 domain is found at 1042-1279 (IELRHVSFKY…KDGVYASLVQ (238 aa)). Residue 1077–1084 (GESGSGKS) participates in ATP binding. N-linked (GlcNAc...) asparagine glycosylation is found at N1131 and N1230.

This sequence belongs to the ABC transporter superfamily. ABCB family. Multidrug resistance exporter (TC 3.A.1.201) subfamily. Interacts with 1-naphthylphthalamic acid (NPA). In terms of processing, phosphorylation level varies significantly during early response to bacterial elicitor. Mostly expressed in roots, especially in the root elongation zone and lateral roots. In mature portion of the root, expressed in the epidermis and cortex. In the root elongation zone, confined to epidermis. In root tips, present in the root cap, S3 columella and epidermal cells.

It localises to the cell membrane. Its function is as follows. Auxin influx transporter that mediates the transport of auxin in roots. Contributes to the basipetal transport in hypocotyls and root tips by establishing an auxin uptake sink in the root cap. Confers sensitivity to 1-N-naphthylphthalamic acid (NPA). Regulates the root elongation, the initiation of lateral roots and the development of root hairs. Can transport IAA, indole-3-propionic acid, NPA syringic acid, vanillic acid and some auxin metabolites, but not 2,4-D and 1-naphthaleneacetic acid. The polypeptide is ABC transporter B family member 4 (ABCB4) (Arabidopsis thaliana (Mouse-ear cress)).